We begin with the raw amino-acid sequence, 319 residues long: Protease HtpX homolog (319 aa).

2 helical membrane passes run 6 to 26 (TAMLLAFMTVLFMAVGYVIGG) and 28 to 48 (GGMMIALVIAAGMNFFSYWNS). His-130 contacts Zn(2+). Glu-131 is a catalytic residue. His-134 contributes to the Zn(2+) binding site. Transmembrane regions (helical) follow at residues 145–165 (MTATLAGAISMLGNFAFFFGG) and 172–192 (PLGFIGVLIAMIVAPLAAALV). Residue Glu-201 coordinates Zn(2+). The interval 280-319 (EMSTGSTAPVRPDNAVRKSRSVPRTGWGRGGSEPPKGPWS) is disordered.

This sequence belongs to the peptidase M48B family. Requires Zn(2+) as cofactor.

It is found in the cell inner membrane. This chain is Protease HtpX homolog, found in Sinorhizobium medicae (strain WSM419) (Ensifer medicae).